The following is a 594-amino-acid chain: Aspartate--tRNA(Asp/Asn) ligase (594 aa).

Residue Glu175 participates in L-aspartate binding. Residues 199–202 are aspartate; sequence QIYK. L-aspartate contacts are provided by Arg221 and His454. 221–223 is a binding site for ATP; the sequence is RDE. Glu488 is a binding site for ATP. Arg495 provides a ligand contact to L-aspartate. ATP is bound at residue 540 to 543; sequence GIDR.

This sequence belongs to the class-II aminoacyl-tRNA synthetase family. Type 1 subfamily. In terms of assembly, homodimer.

The protein localises to the cytoplasm. The catalysed reaction is tRNA(Asx) + L-aspartate + ATP = L-aspartyl-tRNA(Asx) + AMP + diphosphate. Its function is as follows. Aspartyl-tRNA synthetase with relaxed tRNA specificity since it is able to aspartylate not only its cognate tRNA(Asp) but also tRNA(Asn). Reaction proceeds in two steps: L-aspartate is first activated by ATP to form Asp-AMP and then transferred to the acceptor end of tRNA(Asp/Asn). The sequence is that of Aspartate--tRNA(Asp/Asn) ligase from Chelativorans sp. (strain BNC1).